The primary structure comprises 457 residues: UDP-N-acetylmuramate--L-alanine ligase (457 aa).

109–115 (GTDGKTT) is an ATP binding site.

Belongs to the MurCDEF family.

The protein resides in the cytoplasm. It carries out the reaction UDP-N-acetyl-alpha-D-muramate + L-alanine + ATP = UDP-N-acetyl-alpha-D-muramoyl-L-alanine + ADP + phosphate + H(+). Its pathway is cell wall biogenesis; peptidoglycan biosynthesis. Cell wall formation. The polypeptide is UDP-N-acetylmuramate--L-alanine ligase (Thermotoga petrophila (strain ATCC BAA-488 / DSM 13995 / JCM 10881 / RKU-1)).